Here is a 375-residue protein sequence, read N- to C-terminus: N5-carboxyaminoimidazole ribonucleotide synthase (375 aa).

ATP contacts are provided by residues R108, K148, 153–159 (GYDGKGQ), 183–186 (EQYL), E191, H214, and 268–269 (NE). The ATP-grasp domain occupies 112–298 (KQTLQDSGSN…QFDTHIKAIT (187 aa)).

Belongs to the PurK/PurT family. Homodimer.

It carries out the reaction 5-amino-1-(5-phospho-beta-D-ribosyl)imidazole + hydrogencarbonate + ATP = 5-carboxyamino-1-(5-phospho-D-ribosyl)imidazole + ADP + phosphate + 2 H(+). It participates in purine metabolism; IMP biosynthesis via de novo pathway; 5-amino-1-(5-phospho-D-ribosyl)imidazole-4-carboxylate from 5-amino-1-(5-phospho-D-ribosyl)imidazole (N5-CAIR route): step 1/2. In terms of biological role, catalyzes the ATP-dependent conversion of 5-aminoimidazole ribonucleotide (AIR) and HCO(3)(-) to N5-carboxyaminoimidazole ribonucleotide (N5-CAIR). This Staphylococcus saprophyticus subsp. saprophyticus (strain ATCC 15305 / DSM 20229 / NCIMB 8711 / NCTC 7292 / S-41) protein is N5-carboxyaminoimidazole ribonucleotide synthase.